Reading from the N-terminus, the 438-residue chain is Dihydroorotase (438 aa).

The Zn(2+) site is built by His-58 and His-60. Residues 60-62 and Asn-92 each bind substrate; that span reads HLR. Zn(2+) is bound by residues Asp-152, His-179, and His-232. Asn-278 contributes to the substrate binding site. Zn(2+) is bound at residue Asp-305. Residue Asp-305 is part of the active site. Substrate contacts are provided by residues His-309 and 323–324; that span reads FG.

This sequence belongs to the metallo-dependent hydrolases superfamily. DHOase family. Class I DHOase subfamily. It depends on Zn(2+) as a cofactor.

The enzyme catalyses (S)-dihydroorotate + H2O = N-carbamoyl-L-aspartate + H(+). The protein operates within pyrimidine metabolism; UMP biosynthesis via de novo pathway; (S)-dihydroorotate from bicarbonate: step 3/3. Its function is as follows. Catalyzes the reversible cyclization of carbamoyl aspartate to dihydroorotate. This chain is Dihydroorotase, found in Leifsonia xyli subsp. xyli (strain CTCB07).